We begin with the raw amino-acid sequence, 141 residues long: Hydroperoxide reductase (141 aa).

The protein belongs to the OsmC/Ohr family. Homodimer.

Its subcellular location is the cytoplasm. In terms of biological role, reduces organic and inorganic peroxide substrates. Protects the cell against oxidative stress. The sequence is that of Hydroperoxide reductase from Mycoplasma pneumoniae (strain ATCC 29342 / M129 / Subtype 1) (Mycoplasmoides pneumoniae).